The chain runs to 1891 residues: Transcription initiation factor TFIID subunit 1 (1891 aa).

Disordered regions lie at residues 1 to 34 (MGPGWAGLLQDKGGGSPSVVMSDTDSDEESAGGG), 154 to 180 (KLMPPPPPPPGPLKKEKDQDDITGVSE), and 197 to 224 (ASEKVDFSSSSDSESEMGPQDAAQSESK). Residues 1 to 435 (MGPGWAGLLQ…VTQLHWEDDI (435 aa)) form the Protein kinase 1 domain. A compositionally biased stretch (pro residues) spans 156–165 (MPPPPPPPGP). A compositionally biased stretch (low complexity) spans 197–208 (ASEKVDFSSSSD). Ser-328 carries the phosphoserine; by autocatalysis modification. Positions 535 to 556 (PDEKEEATSNSPSKENKKESSL) are disordered. The tract at residues 538–997 (KEEATSNSPS…KIPNKPTQQK (460 aa)) is histone acetyltransferase (HAT). Position 565 is an N6-acetyllysine (Lys-565). Residues Lys-570 and Lys-583 each participate in a glycyl lysine isopeptide (Lys-Gly) (interchain with G-Cter in SUMO2) cross-link. Disordered stretches follow at residues 990–1009 (PNKPTQQKDDKEPQPVKKTV), 1128–1148 (MLQNKKTSSQLSREREEQERK), and 1254–1278 (RLKRNQEKEKLKGPPEKKPKKMKER). Basic and acidic residues-rich tracts occupy residues 995–1004 (QQKDDKEPQP), 1139–1148 (SREREEQERK), and 1254–1270 (RLKRNQEKEKLKGPPEK). A DNA-binding region (HMG box) is located at residues 1216 to 1294 (VRIRTTKDEE…CGACGAIGHM (79 aa)). Residues 1363–1650 (VLKFPKQQLP…TAKEAALEEA (288 aa)) are interaction with ASF1A and ASF1B. The short motif at 1372–1379 (PPKKKRRV) is the Nuclear localization signal element. Bromo domains are found at residues 1397 to 1505 (RRRT…LKEK) and 1519 to 1628 (LLDD…LTEY). One can recognise a Protein kinase 2 domain in the interval 1446–1891 (MDLQTLRENV…AGDTDLDSDE (446 aa)). Disordered stretches follow at residues 1651 to 1676 (ELESLDPMTPGPYTPQPPDLYDNNTS) and 1690 to 1891 (SNLS…DSDE). Positions 1659-1668 (TPGPYTPQPP) are enriched in pro residues. 2 positions are modified to phosphoserine: Ser-1690 and Ser-1693. Over residues 1690 to 1708 (SNLSVLDIPSATSEKQLTQ) the composition is skewed to polar residues. Acidic residues-rich tracts occupy residues 1711 to 1723 (GDGDGDLADEEEG) and 1741 to 1756 (EGEDDEEDAGSDEEGD). The segment covering 1764–1778 (LSESGSDSDVESGSL) has biased composition (low complexity). A phosphoserine mark is found at Ser-1799, Ser-1802, and Ser-1820. Residues 1830–1840 (KSNTQDTSFSS) show a composition bias toward polar residues. The span at 1846–1855 (VSEEEEDEEE) shows a compositional bias: acidic residues. Ser-1847 carries the phosphoserine modification. Over residues 1858–1867 (SGPSVLSQVH) the composition is skewed to polar residues.

Belongs to the TAF1 family. In terms of assembly, component of the TFIID basal transcription factor complex, composed of TATA-box-binding protein TBP, and a number of TBP-associated factors (TAFs). TFIID consists of at least TBP, TAF1, TAF2, TAF3, TAF4, TAF5, TAF6, TAF7, TAF8, TAF9, TAF10, TAF11, TAF12 and TAF13. Interacts with TAF7; the interaction is direct. TAF1, when part of the TFIID complex, interacts with C-terminus of TP53. Part of a TFIID-containing RNA polymerase II pre-initiation complex that is composed of TBP and at least GTF2A1, GTF2A2, GTF2E1, GTF2E2, GTF2F1, GTF2H2, GTF2H3, GTF2H4, GTF2H5, GTF2B, TCEA1, ERCC2, ERCC3, TAF1, TAF2, TAF3, TAF4, TAF5, TAF6, TAF7, TAF8, TAF9, TAF10, TAF11, TAF12 and TAF13. Component of some MLL1/MLL complex, at least composed of the core components KMT2A/MLL1, ASH2L, HCFC1/HCF1, WDR5 and RBBP5, as well as the facultative components BACC1, CHD8, E2F6, HSP70, INO80C, KANSL1, LAS1L, MAX, MCRS1, MGA, KAT8/MOF, PELP1, PHF20, PRP31, RING2, RUVB1/TIP49A, RUVB2/TIP49B, SENP3, TAF1, TAF4, TAF6, TAF7, TAF9 and TEX10. RB1 interacts with the N-terminal domain of TAF1. Interacts with ASF1A and ASF1B. Interacts (via bromo domains) with acetylated lysine residues on the N-terminus of histone H1.4, H2A, H2B, H3 and H4 (in vitro). Requires Mg(2+) as cofactor. Post-translationally, phosphorylated by casein kinase II in vitro.

The protein localises to the nucleus. The enzyme catalyses L-seryl-[protein] + ATP = O-phospho-L-seryl-[protein] + ADP + H(+). The catalysed reaction is L-threonyl-[protein] + ATP = O-phospho-L-threonyl-[protein] + ADP + H(+). It carries out the reaction L-lysyl-[protein] + acetyl-CoA = N(6)-acetyl-L-lysyl-[protein] + CoA + H(+). Its activity is regulated as follows. Autophosphorylates on Ser residues. Inhibited by retinoblastoma tumor suppressor protein, RB1. Binding to TAF1 or CIITA inhibits the histone acetyltransferase activity. The TFIID basal transcription factor complex plays a major role in the initiation of RNA polymerase II (Pol II)-dependent transcription. TFIID recognizes and binds promoters with or without a TATA box via its subunit TBP, a TATA-box-binding protein, and promotes assembly of the pre-initiation complex (PIC). The TFIID complex consists of TBP and TBP-associated factors (TAFs), including TAF1, TAF2, TAF3, TAF4, TAF5, TAF6, TAF7, TAF8, TAF9, TAF10, TAF11, TAF12 and TAF13. TAF1 is the largest component and core scaffold of the TFIID complex, involved in nucleating complex assembly. TAF1 forms a promoter DNA binding subcomplex of TFIID, together with TAF7 and TAF2. Contains novel N- and C-terminal Ser/Thr kinase domains which can autophosphorylate or transphosphorylate other transcription factors. Phosphorylates TP53 on 'Thr-55' which leads to MDM2-mediated degradation of TP53. Phosphorylates GTF2A1 and GTF2F1 on Ser residues. Possesses DNA-binding activity. Exhibits histone acetyltransferase activity towards histones H3 and H4. Essential for progression of the G1 phase of the cell cycle. The chain is Transcription initiation factor TFIID subunit 1 from Mus musculus (Mouse).